The following is a 373-amino-acid chain: Phosphoserine aminotransferase (373 aa).

Arg41 is an L-glutamate binding site. Residues 75–76, Trp101, Thr152, Asp172, and Gln195 each bind pyridoxal 5'-phosphate; that span reads GT. Lys196 carries the post-translational modification N6-(pyridoxal phosphate)lysine. Pyridoxal 5'-phosphate is bound at residue 236–237; the sequence is NT.

The protein belongs to the class-V pyridoxal-phosphate-dependent aminotransferase family. SerC subfamily. In terms of assembly, homodimer. It depends on pyridoxal 5'-phosphate as a cofactor.

It is found in the cytoplasm. The catalysed reaction is O-phospho-L-serine + 2-oxoglutarate = 3-phosphooxypyruvate + L-glutamate. The enzyme catalyses 4-(phosphooxy)-L-threonine + 2-oxoglutarate = (R)-3-hydroxy-2-oxo-4-phosphooxybutanoate + L-glutamate. It functions in the pathway amino-acid biosynthesis; L-serine biosynthesis; L-serine from 3-phospho-D-glycerate: step 2/3. Its function is as follows. Catalyzes the reversible conversion of 3-phosphohydroxypyruvate to phosphoserine and of 3-hydroxy-2-oxo-4-phosphonooxybutanoate to phosphohydroxythreonine. The polypeptide is Phosphoserine aminotransferase (Lactobacillus helveticus (strain DPC 4571)).